The chain runs to 341 residues: Anthranilate phosphoribosyltransferase (341 aa).

5-phospho-alpha-D-ribose 1-diphosphate-binding positions include G80, 83 to 84, T88, 90 to 93, 108 to 116, and S120; these read GD, NIST, and KHGNRAVSS. G80 is an anthranilate binding site. S92 contributes to the Mg(2+) binding site. Position 111 (N111) interacts with anthranilate. Position 166 (R166) interacts with anthranilate. Positions 225 and 226 each coordinate Mg(2+).

Belongs to the anthranilate phosphoribosyltransferase family. As to quaternary structure, homodimer. Requires Mg(2+) as cofactor.

It catalyses the reaction N-(5-phospho-beta-D-ribosyl)anthranilate + diphosphate = 5-phospho-alpha-D-ribose 1-diphosphate + anthranilate. Its pathway is amino-acid biosynthesis; L-tryptophan biosynthesis; L-tryptophan from chorismate: step 2/5. Catalyzes the transfer of the phosphoribosyl group of 5-phosphorylribose-1-pyrophosphate (PRPP) to anthranilate to yield N-(5'-phosphoribosyl)-anthranilate (PRA). The protein is Anthranilate phosphoribosyltransferase of Priestia megaterium (strain ATCC 12872 / QMB1551) (Bacillus megaterium).